A 105-amino-acid chain; its full sequence is uncharacterized protein (105 aa).

Helical transmembrane passes span Val-7–Leu-26 and Val-30–Ile-52.

The protein resides in the cell membrane. This is an uncharacterized protein from Archaeoglobus fulgidus (strain ATCC 49558 / DSM 4304 / JCM 9628 / NBRC 100126 / VC-16).